The following is a 69-amino-acid chain: Putative membrane protein insertion efficiency factor (69 aa).

This sequence belongs to the UPF0161 family.

The protein localises to the cell membrane. In terms of biological role, could be involved in insertion of integral membrane proteins into the membrane. The sequence is that of Putative membrane protein insertion efficiency factor from Clostridium botulinum (strain 657 / Type Ba4).